We begin with the raw amino-acid sequence, 240 residues long: Uridylate kinase (240 aa).

Position 12–15 (12–15 (KLSG)) interacts with ATP. The interval 20-25 (GDQGYG) is involved in allosteric activation by GTP. Gly-54 is a UMP binding site. Gly-55 and Arg-59 together coordinate ATP. UMP is bound by residues Asp-74 and 135 to 142 (TGNPYFST). 3 residues coordinate ATP: Asn-163, Tyr-169, and Asp-172.

Belongs to the UMP kinase family. In terms of assembly, homohexamer.

Its subcellular location is the cytoplasm. It carries out the reaction UMP + ATP = UDP + ADP. It functions in the pathway pyrimidine metabolism; CTP biosynthesis via de novo pathway; UDP from UMP (UMPK route): step 1/1. With respect to regulation, allosterically activated by GTP. Inhibited by UTP. Catalyzes the reversible phosphorylation of UMP to UDP. The sequence is that of Uridylate kinase from Oceanobacillus iheyensis (strain DSM 14371 / CIP 107618 / JCM 11309 / KCTC 3954 / HTE831).